Consider the following 98-residue polypeptide: Defensin-like protein 68 (98 aa).

A signal peptide spans 1–19; sequence MGSSKLLVALTLVVMITIS. 4 cysteine pairs are disulfide-bonded: Cys-38–Cys-88, Cys-42–Cys-65, Cys-51–Cys-86, and Cys-55–Cys-87.

The protein belongs to the DEFL family.

Its subcellular location is the secreted. This Arabidopsis thaliana (Mouse-ear cress) protein is Defensin-like protein 68.